Consider the following 692-residue polypeptide: Putative receptor-like protein kinase At1g80870 (692 aa).

Residues 20–40 form a helical membrane-spanning segment; that stretch reads LFLILTISSSLVIFFAILYFI. Positions 81–673 constitute a Protein kinase domain; the sequence is FDESNVIGKG…GEMDISSTAF (593 aa). ATP is bound by residues 87-95 and lysine 109; that span reads IGKGGSGTV. Aspartate 206 functions as the Proton acceptor in the catalytic mechanism. Disordered regions lie at residues 427–446 and 511–533; these read EISERKNKRSKNKKKKHRNM and RRKSNSSSKKKKKNNNGSMGSEM. 2 stretches are compositionally biased toward basic residues: residues 432–444 and 511–524; these read KNKRSKNKKKKHR and RRKSNSSSKKKKKN.

This sequence belongs to the protein kinase superfamily. Ser/Thr protein kinase family.

It is found in the cell membrane. It carries out the reaction L-seryl-[protein] + ATP = O-phospho-L-seryl-[protein] + ADP + H(+). The catalysed reaction is L-threonyl-[protein] + ATP = O-phospho-L-threonyl-[protein] + ADP + H(+). This is Putative receptor-like protein kinase At1g80870 from Arabidopsis thaliana (Mouse-ear cress).